The sequence spans 919 residues: MTAPWRRLRSLVWEYWAGFLVCAFWIPDSRGMPHVIRIGGIFEYADGPNAQVMNAEEHAFRFSANIINRNRTLLPNTTLTYDIQRIHFHDSFEATKKACDQLALGVVAIFGPSQGSCTNAVQSICNALEVPHIQLRWKHHPLDNKDTFYVNLYPDYASLSHAILDLVQSLKWRSATVVYDDSTGLIRLQELIMAPSRYNIRLKIRQLPIDSDDSRPLLKEMKRGREFRIIFDCSHTMAAQILKQAMAMGMMTEYYHFIFTTLDLYALDLEPYRYSGVNLTGFRILNVDNPHVSAIVEKWAMERLQAAPRAESGLLDGVMMTDAALLYDAVHIVSVCYQRAPQMTVNSLQCHRHKAWRFGGRFMNFIKEAQWEGLTGRIVFNKTSGLRTDFDLDIISLKEDGLEKVGVWSPADGLNITEVAKGRGPNVTDSLTNRSLIVTTVLEEPFVMFRKSDRTLYGNDRFEGYCIDLLKELAHILGFSYEIRLVEDGKYGAQDDKGQWNGMVKELIDHKADLAVAPLTITHVREKAIDFSKPFMTLGVSILYRKPNGTNPSVFSFLNPLSPDIWMYVLLAYLGVSCVLFVIARFSPYEWYDAHPCNPGSEVVENNFTLLNSFWFGMGSLMQQGSELMPKALSTRIIGGIWWFFTLIIISSYTANLAAFLTVERMESPIDSADDLAKQTKIEYGAVKDGATMTFFKKSKISTFEKMWAFMSSKPSALVKNNEEGIQRTLTADYALLMESTTIEYITQRNCNLTQIGGLIDSKGYGIGTPMGSPYRDKITIAILQLQEEDKLHIMKEKWWRGSGCPEEENKEASALGIQKIGGIFIVLAAGLVLSVLVAVGEFIYKLRKTAEREQRSFCSTVADEIRFSLTCQRRLKHKPQPPMMVKTDAVINMHTFNDRRLPGKDSMSCSTSLAPVFP.

The N-terminal stretch at 1 to 31 is a signal peptide; it reads MTAPWRRLRSLVWEYWAGFLVCAFWIPDSRG. At 32–563 the chain is on the extracellular side; it reads MPHVIRIGGI…VFSFLNPLSP (532 aa). N-linked (GlcNAc...) asparagine glycans are attached at residues asparagine 70, asparagine 76, asparagine 278, asparagine 381, asparagine 415, asparagine 426, and asparagine 433. The cysteines at positions 99 and 350 are disulfide-linked. 3 residues coordinate L-glutamate: proline 518, threonine 520, and arginine 525. 2 N-linked (GlcNAc...) asparagine glycosylation sites follow: asparagine 548 and asparagine 551. Residues 564–584 form a helical membrane-spanning segment; it reads DIWMYVLLAYLGVSCVLFVIA. The Cytoplasmic segment spans residues 585–636; that stretch reads RFSPYEWYDAHPCNPGSEVVENNFTLLNSFWFGMGSLMQQGSELMPKALSTR. The helical transmembrane segment at 637–657 threads the bilayer; the sequence is IIGGIWWFFTLIIISSYTANL. Topologically, residues 658-820 are extracellular; that stretch reads AAFLTVERME…KEASALGIQK (163 aa). Residues alanine 691, threonine 692, and glutamate 739 each contribute to the L-glutamate site. Residue asparagine 752 is glycosylated (N-linked (GlcNAc...) asparagine). The chain crosses the membrane as a helical span at residues 821-841; the sequence is IGGIFIVLAAGLVLSVLVAVG. Residues 842–919 are Cytoplasmic-facing; sequence EFIYKLRKTA…CSTSLAPVFP (78 aa). At serine 869 the chain carries Phosphoserine. Lysine 887 is covalently cross-linked (Glycyl lysine isopeptide (Lys-Gly) (interchain with G-Cter in SUMO1)).

It belongs to the glutamate-gated ion channel (TC 1.A.10.1) family. GRIK3 subfamily. As to quaternary structure, homotetramer, and heterotetramer with either GRIK4 or GRIK5. Can form functional heteromeric receptors with GRIK2. Interacts with PRKCABP. Interacts with NETO2. Detected in whole brain, cerebellum, brain cortex and hippocampus.

It localises to the cell membrane. The protein resides in the postsynaptic cell membrane. It carries out the reaction Ca(2+)(in) = Ca(2+)(out). Its activity is regulated as follows. Glutamate-gated receptor activity inhibited by spermine. Functionally, ionotropic glutamate receptor that functions as a cation-permeable ligand-gated ion channel, gated by L-glutamate and the glutamatergic agonist kainic acid. Binding of the excitatory neurotransmitter L-glutamate induces a conformation change, leading to the opening of the cation channel, and thereby converts the chemical signal to an electrical impulse. The receptor then desensitizes rapidly and enters a transient inactive state, characterized by the presence of bound agonist. In association with GRIK2, involved in presynaptic facilitation of glutamate release at hippocampal mossy fiber synapses. The sequence is that of Glutamate receptor ionotropic, kainate 3 (Grik3) from Mus musculus (Mouse).